Consider the following 342-residue polypeptide: Glycerol-3-phosphate dehydrogenase [NAD(P)+] (342 aa).

The NADPH site is built by Trp11, Arg33, and Lys112. 3 residues coordinate sn-glycerol 3-phosphate: Lys112, Gly147, and Ser149. Residue Ala151 coordinates NADPH. Positions 202, 255, 265, 266, and 267 each coordinate sn-glycerol 3-phosphate. Residue Lys202 is the Proton acceptor of the active site. Arg266 lines the NADPH pocket. NADPH is bound by residues Val290 and Glu292.

This sequence belongs to the NAD-dependent glycerol-3-phosphate dehydrogenase family.

It localises to the cytoplasm. The enzyme catalyses sn-glycerol 3-phosphate + NAD(+) = dihydroxyacetone phosphate + NADH + H(+). It carries out the reaction sn-glycerol 3-phosphate + NADP(+) = dihydroxyacetone phosphate + NADPH + H(+). It functions in the pathway membrane lipid metabolism; glycerophospholipid metabolism. Functionally, catalyzes the reduction of the glycolytic intermediate dihydroxyacetone phosphate (DHAP) to sn-glycerol 3-phosphate (G3P), the key precursor for phospholipid synthesis. The protein is Glycerol-3-phosphate dehydrogenase [NAD(P)+] of Cupriavidus metallidurans (strain ATCC 43123 / DSM 2839 / NBRC 102507 / CH34) (Ralstonia metallidurans).